We begin with the raw amino-acid sequence, 412 residues long: Tyrosine--tRNA ligase (412 aa).

The 'HIGH' region signature appears at 48-57; it reads PSRPDLHLGH. The short motif at 232 to 236 is the 'KMSKS' region element; the sequence is KMSKS. Lys-235 contacts ATP. The S4 RNA-binding domain maps to 342 to 405; that stretch reads VGLLNLMRHA…GKRRFARIRP (64 aa).

This sequence belongs to the class-I aminoacyl-tRNA synthetase family. TyrS type 2 subfamily. In terms of assembly, homodimer.

The protein localises to the cytoplasm. It catalyses the reaction tRNA(Tyr) + L-tyrosine + ATP = L-tyrosyl-tRNA(Tyr) + AMP + diphosphate + H(+). In terms of biological role, catalyzes the attachment of tyrosine to tRNA(Tyr) in a two-step reaction: tyrosine is first activated by ATP to form Tyr-AMP and then transferred to the acceptor end of tRNA(Tyr). In Salinibacter ruber (strain DSM 13855 / M31), this protein is Tyrosine--tRNA ligase.